An 829-amino-acid polypeptide reads, in one-letter code: Probable beta-glucosidase H (829 aa).

Residue Asp-225 is part of the active site. Positions 389–548 constitute a PA14 domain; the sequence is RMLSNAVIRF…DPEQMVRDAV (160 aa). 5 N-linked (GlcNAc...) asparagine glycosylation sites follow: Asn-416, Asn-431, Asn-473, Asn-602, and Asn-627.

This sequence belongs to the glycosyl hydrolase 3 family.

It localises to the secreted. It carries out the reaction Hydrolysis of terminal, non-reducing beta-D-glucosyl residues with release of beta-D-glucose.. It participates in glycan metabolism; cellulose degradation. Its function is as follows. Beta-glucosidases are one of a number of cellulolytic enzymes involved in the degradation of cellulosic biomass. Catalyzes the last step releasing glucose from the inhibitory cellobiose. The sequence is that of Probable beta-glucosidase H (bglH) from Aspergillus clavatus (strain ATCC 1007 / CBS 513.65 / DSM 816 / NCTC 3887 / NRRL 1 / QM 1276 / 107).